We begin with the raw amino-acid sequence, 369 residues long: Tyrosyl-DNA phosphodiesterase 2 (369 aa).

A compositionally biased stretch (basic and acidic residues) spans 1–17 (MELEARAEPRSPRAGRG). 2 disordered regions span residues 1 to 26 (MELE…EDEE) and 80 to 117 (AAAA…QQDD). Residues 99–112 (DDTASNTSSSGADS) show a composition bias toward low complexity. The segment at 127-131 (NIDGL) is interaction with 5' end of substrate DNA. Mg(2+) contacts are provided by Asp129 and Glu159. An interaction with 5' end of substrate DNA region spans residues 233–238 (HLESTR). Asp269 acts as the Proton donor/acceptor in catalysis. Residues 271–273 (NLR) are interaction with 5' end of substrate DNA.

This sequence belongs to the CCR4/nocturin family. TTRAP/TDP2 subfamily. Requires Mg(2+) as cofactor. Mn(2+) serves as cofactor.

It is found in the nucleus. It localises to the PML body. Functionally, DNA repair enzyme that can remove a variety of covalent adducts from DNA through hydrolysis of a 5'-phosphodiester bond, giving rise to DNA with a free 5' phosphate. Catalyzes the hydrolysis of dead-end complexes between DNA and the topoisomerase 2 (TOP2) active site tyrosine residue. Hydrolyzes 5'-phosphoglycolates on protruding 5' ends on DNA double-strand breaks (DSBs) due to DNA damage by radiation and free radicals. The 5'-tyrosyl DNA phosphodiesterase activity can enable the repair of TOP2-induced DSBs without the need for nuclease activity, creating a 'clean' DSB with 5'-phosphate termini that are ready for ligation. Also has 3'-tyrosyl DNA phosphodiesterase activity, but less efficiently and much slower than TDP1. The sequence is that of Tyrosyl-DNA phosphodiesterase 2 (TDP2) from Gallus gallus (Chicken).